We begin with the raw amino-acid sequence, 1109 residues long: Zinc finger E-box-binding homeobox 1 (1109 aa).

2 disordered regions span residues 1-106 and 123-143; these read MADG…DPNV and PEED…NGTP. Positions 15–30 are enriched in low complexity; that stretch reads PRRNNVTNYNTVVEAN. Phosphoserine occurs at positions 31 and 33. A compositionally biased stretch (acidic residues) spans 87-98; that stretch reads VKDDECDSDAEN. The segment at 150 to 173 adopts a C2H2-type 1 zinc-finger fold; sequence LTCPYCDRGYKRFTSLKEHIKYRH. Glycyl lysine isopeptide (Lys-Gly) (interchain with G-Cter in SUMO2) cross-links involve residues Lys-166 and Lys-175. 2 consecutive C2H2-type zinc fingers follow at residues 180–202 and 220–242; these read FSCS…MTSH and FKCT…LRIH. The segment at 248–272 adopts a C2H2-type 4; atypical zinc-finger fold; it reads YECPNCKKRFSHSGSYSSHISSKKC. Positions 278–307 are disordered; the sequence is VNGRPRSGLKTSQCSSPSLSTSPGSPTRPQ. Lys-287 participates in a covalent cross-link: Glycyl lysine isopeptide (Lys-Gly) (interchain with G-Cter in SUMO2). The span at 288–304 shows a compositional bias: low complexity; it reads TSQCSSPSLSTSPGSPT. A phosphoserine mark is found at Ser-293 and Ser-302. Glycyl lysine isopeptide (Lys-Gly) (interchain with G-Cter in SUMO2) cross-links involve residues Lys-311 and Lys-315. Lys-327 is covalently cross-linked (Glycyl lysine isopeptide (Lys-Gly) (interchain with G-Cter in SUMO); alternate). Lys-327 is covalently cross-linked (Glycyl lysine isopeptide (Lys-Gly) (interchain with G-Cter in SUMO2); alternate). Glycyl lysine isopeptide (Lys-Gly) (interchain with G-Cter in SUMO2) cross-links involve residues Lys-419, Lys-473, Lys-484, Lys-495, and Lys-528. Disordered regions lie at residues 468–501, 525–566, and 614–711; these read VPQN…KDKS, PELK…SQPP, and QIPG…PQVE. The segment covering 483 to 501 has biased composition (basic and acidic residues); the sequence is CKSEKSPEDLTVKSEKDKS. The segment at residues 559 to 618 is a DNA-binding region (homeobox; atypical); that stretch reads DLSPSQPPLKNLLSLLKAYYALNAQPSTEELTKIADSVNLPLDVVKKWFEKMQAGQIPGQ. Over residues 654-665 the composition is skewed to polar residues; the sequence is RGQSPLKMTSSP. A phosphoserine mark is found at Ser-657, Ser-664, Ser-671, and Ser-678. Positions 673 to 703 are enriched in polar residues; it reads INGSRSCTSSPSPLNLSSARNPQGYSCVSEG. Thr-680 is subject to Phosphothreonine. Ser-682 carries the post-translational modification Phosphoserine. A Glycyl lysine isopeptide (Lys-Gly) (interchain with G-Cter in SUMO); alternate cross-link involves residue Lys-752. Lys-752 is covalently cross-linked (Glycyl lysine isopeptide (Lys-Gly) (interchain with G-Cter in SUMO2); alternate). The segment at 834-873 is disordered; that stretch reads PPVKVIQPNGNQDERQDTSSEGVSVEDQNDSDCTPPKKKT. 2 consecutive C2H2-type zinc fingers follow at residues 881–903 and 909–931; these read YACD…KYEH and HECG…MRLH. The C2H2-type 7; atypical zinc finger occupies 937–958; that stretch reads YQCDKCGKRFSHSGSYSQHMNH. The interval 968 to 1109 is disordered; that stretch reads EDRDAMEQED…RLSEEKTNEA (142 aa). The span at 1012–1066 shows a compositional bias: acidic residues; it reads EEDEDSEKEEEEEDKEMEELQEDKECENPQEEEEEEEEEEEEEEEEEEEEAEEAE. Residues 1071 to 1087 show a composition bias toward low complexity; that stretch reads AAKTGGAVEEEAAQQAG. Residues 1097–1109 show a composition bias toward basic and acidic residues; it reads ESKRLSEEKTNEA.

Belongs to the delta-EF1/ZFH-1 C2H2-type zinc-finger family. As to quaternary structure, interacts (via N-terminus) with SMARCA4/BRG1. In terms of processing, ubiquitinated, leading to degradation in a proteasome-dependent manner. Deubiquitinated by USP51, leading to stabilization.

It localises to the nucleus. Functionally, acts as a transcriptional repressor. Binds to E-box sequences in the immunoglobulin heavy chain enhancer as well as in the regulatory regions of many other tissue-specific genes. Represses E-cadherin promoter and induces an epithelial-mesenchymal transition (EMT) by recruiting SMARCA4/BRG1. Represses BCL6 transcription in the presence of the corepressor CTBP1. Positively regulates neuronal differentiation. Represses RCOR1 transcription activation during neurogenesis. Represses transcription by binding to the E box (5'-CANNTG-3'). In the absence of TGFB1, acts as a repressor of COL1A2 transcription via binding to the E-box in the upstream enhancer region. The polypeptide is Zinc finger E-box-binding homeobox 1 (Rattus norvegicus (Rat)).